The following is a 221-amino-acid chain: Putative efflux system component YhbJ (221 aa).

The chain crosses the membrane as a helical span at residues 17–37 (LILTNIIGLIVVLAIIAGGAY).

This sequence belongs to the membrane fusion protein (MFP) (TC 8.A.1) family.

The protein localises to the cell membrane. This chain is Putative efflux system component YhbJ (yhbJ), found in Bacillus subtilis (strain 168).